Here is a 209-residue protein sequence, read N- to C-terminus: Kynurenine formamidase (209 aa).

Phe-18 contacts substrate. 3 residues coordinate Zn(2+): His-48, His-52, and Asp-54. His-58 (proton donor/acceptor) is an active-site residue. Residues His-160 and Glu-172 each coordinate Zn(2+).

This sequence belongs to the Cyclase 1 superfamily. KynB family. As to quaternary structure, homodimer. Zn(2+) is required as a cofactor.

It carries out the reaction N-formyl-L-kynurenine + H2O = L-kynurenine + formate + H(+). Its pathway is amino-acid degradation; L-tryptophan degradation via kynurenine pathway; L-kynurenine from L-tryptophan: step 2/2. Its function is as follows. Catalyzes the hydrolysis of N-formyl-L-kynurenine to L-kynurenine, the second step in the kynurenine pathway of tryptophan degradation. The polypeptide is Kynurenine formamidase (Bordetella bronchiseptica (strain ATCC BAA-588 / NCTC 13252 / RB50) (Alcaligenes bronchisepticus)).